Reading from the N-terminus, the 121-residue chain is MARIAGVDIPRDKRVVISLTYIYGIGKATAQKILAEAGVSEDTRVRDLTEEELGKIREIVDRLKVEGDLRREVSLNIKRLMEIGCYRGLRHRRGLPVRGQNTKNNARTRKGPRRTVANKKK.

The disordered stretch occupies residues 94–121 (GLPVRGQNTKNNARTRKGPRRTVANKKK). The span at 106–121 (ARTRKGPRRTVANKKK) shows a compositional bias: basic residues.

This sequence belongs to the universal ribosomal protein uS13 family. In terms of assembly, part of the 30S ribosomal subunit. Forms a loose heterodimer with protein S19. Forms two bridges to the 50S subunit in the 70S ribosome.

Its function is as follows. Located at the top of the head of the 30S subunit, it contacts several helices of the 16S rRNA. In the 70S ribosome it contacts the 23S rRNA (bridge B1a) and protein L5 of the 50S subunit (bridge B1b), connecting the 2 subunits; these bridges are implicated in subunit movement. Contacts the tRNAs in the A and P-sites. In Anoxybacillus flavithermus (strain DSM 21510 / WK1), this protein is Small ribosomal subunit protein uS13.